Consider the following 212-residue polypeptide: Ribonuclease HII (212 aa).

The RNase H type-2 domain maps to 20–209; that stretch reads TCIVGVDEVG…VHNILYQEAS (190 aa). Positions 26, 27, and 117 each coordinate a divalent metal cation.

This sequence belongs to the RNase HII family. The cofactor is Mn(2+). Mg(2+) is required as a cofactor.

The protein localises to the cytoplasm. It catalyses the reaction Endonucleolytic cleavage to 5'-phosphomonoester.. Its function is as follows. Endonuclease that specifically degrades the RNA of RNA-DNA hybrids. The polypeptide is Ribonuclease HII (Cereibacter sphaeroides (strain ATCC 17025 / ATH 2.4.3) (Rhodobacter sphaeroides)).